The chain runs to 905 residues: Dopamine D2-like receptor (905 aa).

The segment at Met1–Gln23 is disordered. The Extracellular portion of the chain corresponds to Met1–Tyr377. N-linked (GlcNAc...) asparagine glycans are attached at residues Asn88, Asn146, Asn156, Asn166, Asn174, Asn257, Asn314, and Asn343. Residues Trp378–Leu398 traverse the membrane as a helical segment. Topologically, residues Ser399–Ser416 are cytoplasmic. Residues Leu417–Val437 form a helical membrane-spanning segment. Topologically, residues Asn438–Phe450 are extracellular. A disulfide bridge links Cys448 with Cys525. A helical transmembrane segment spans residues Tyr451–Ile471. Topologically, residues Asp472–Cys493 are cytoplasmic. Residues Leu494–Leu514 traverse the membrane as a helical segment. At Asn515–Asp531 the chain is on the extracellular side. A helical membrane pass occupies residues Phe532–Tyr552. At Trp553 to Thr830 the chain is on the cytoplasmic side. 3 disordered regions span residues Ser600 to Asp631, Ala702 to Val753, and Asp780 to Gln799. Residues Ala702 to Ala722 are compositionally biased toward low complexity. Residues Thr723–Arg734 show a composition bias toward polar residues. Over residues Pro735–Pro746 the composition is skewed to basic and acidic residues. A helical membrane pass occupies residues Leu831–Met851. Residues Asp852–Tyr869 lie on the Extracellular side of the membrane. Residues Met870–Phe890 form a helical membrane-spanning segment. Topologically, residues Asn891–Gly905 are cytoplasmic.

It belongs to the G-protein coupled receptor 1 family. In terms of tissue distribution, highest expression is in adult heads.

The protein localises to the cell membrane. Receptor for dopamine. The activity of this receptor is mediated by G proteins which inhibit adenylyl cyclase. The protein is Dopamine D2-like receptor of Drosophila melanogaster (Fruit fly).